Consider the following 98-residue polypeptide: NADH-ubiquinone oxidoreductase chain 4L (98 aa).

3 helical membrane passes run 1 to 21 (MTMVYANIFLAFITSLMGLLM), 29 to 49 (SLLCLEGMMLSLFVMMTVTIL), and 61 to 81 (IILLVFAACEAALGLSLLVMV).

The protein belongs to the complex I subunit 4L family. In terms of assembly, core subunit of respiratory chain NADH dehydrogenase (Complex I) which is composed of 45 different subunits.

It localises to the mitochondrion inner membrane. It catalyses the reaction a ubiquinone + NADH + 5 H(+)(in) = a ubiquinol + NAD(+) + 4 H(+)(out). Its function is as follows. Core subunit of the mitochondrial membrane respiratory chain NADH dehydrogenase (Complex I) which catalyzes electron transfer from NADH through the respiratory chain, using ubiquinone as an electron acceptor. Part of the enzyme membrane arm which is embedded in the lipid bilayer and involved in proton translocation. This is NADH-ubiquinone oxidoreductase chain 4L (MT-ND4L) from Leptonychotes weddellii (Weddell seal).